The following is a 185-amino-acid chain: Large ribosomal subunit protein uL5 (185 aa).

It belongs to the universal ribosomal protein uL5 family. As to quaternary structure, part of the 50S ribosomal subunit; part of the 5S rRNA/L5/L18/L25 subcomplex. Contacts the 5S rRNA and the P site tRNA. Forms a bridge to the 30S subunit in the 70S ribosome.

In terms of biological role, this is one of the proteins that bind and probably mediate the attachment of the 5S RNA into the large ribosomal subunit, where it forms part of the central protuberance. In the 70S ribosome it contacts protein S13 of the 30S subunit (bridge B1b), connecting the 2 subunits; this bridge is implicated in subunit movement. Contacts the P site tRNA; the 5S rRNA and some of its associated proteins might help stabilize positioning of ribosome-bound tRNAs. The polypeptide is Large ribosomal subunit protein uL5 (Bartonella tribocorum (strain CIP 105476 / IBS 506)).